The following is a 243-amino-acid chain: MTGIAAASFFSNTCRFGGCGLHFPTLADLIEHIEDNHIDTDPRVLEKQELQQPTYVALSYINRFMTDAARREQESLKKKIQPKLSLTLSSSVSRGNVSTPPRHSSGSLTPPVTPPITPSSSFRSSTPTGSEYDEEEVDYEESDSDESWTTESAISSEAILSSMCMNGGEEKPFACPVPGCKKRYKNVNGIKYHAKNGHRTQIRVRKPFKCRCGKSYKTAQGLRHHTINFHPPVSAEMIRKMQQ.

The segment at 12-37 adopts a C2H2-type 1 zinc-finger fold; that stretch reads NTCRFGGCGLHFPTLADLIEHIEDNH. The required for interaction with NR2C2 stretch occupies residues 39 to 79; it reads DTDPRVLEKQELQQPTYVALSYINRFMTDAARREQESLKKK. A compositionally biased stretch (polar residues) spans 89–108; the sequence is SSSVSRGNVSTPPRHSSGSL. The segment at 89 to 151 is disordered; the sequence is SSSVSRGNVS…SDSDESWTTE (63 aa). Phosphothreonine occurs at positions 109 and 113. Positions 118-130 are enriched in low complexity; sequence PSSSFRSSTPTGS. Residues 131–148 show a composition bias toward acidic residues; that stretch reads EYDEEEVDYEESDSDESW. The segment at 173–198 adopts a C2H2-type 2 zinc-finger fold; the sequence is FACPVPGCKKRYKNVNGIKYHAKNGH. The segment at 208 to 230 adopts a C2H2-type 3; degenerate zinc-finger fold; sequence FKCRCGKSYKTAQGLRHHTINFH.

Interacts with NR2C2 (via ligand-binding region). Expressed in range of tissues with highest expression levels in testis, liver, muscle and fat and lowest levels in kidney. Detected in liver and white adipose tissue (at protein level).

Its subcellular location is the nucleus. In terms of biological role, acts as a transcriptional corepressor of orphan nuclear receptor NR2C2. Inhibits expression of the gluconeogenesis enzyme PCK2 through inhibition of NR2C2 activity. Also involved in transcriptional activation of NAMPT by promoting expression of PPARA and PPARD. Plays a role in lipid metabolism by suppressing lipogenesis, increasing lipolysis and decreasing lipid accumulation in adipose tissue. Plays a role in glucose homeostasis by improving glucose metabolism and insulin sensitivity. The protein is Juxtaposed with another zinc finger protein 1 (Jazf1) of Mus musculus (Mouse).